A 104-amino-acid chain; its full sequence is Ribonuclease P protein component 4 (104 aa).

Residues Cys57, Cys60, Cys83, and Cys86 each contribute to the Zn(2+) site.

The protein belongs to the eukaryotic/archaeal RNase P protein component 4 family. As to quaternary structure, consists of a catalytic RNA component and at least 4-5 protein subunits. Zn(2+) serves as cofactor.

It localises to the cytoplasm. The catalysed reaction is Endonucleolytic cleavage of RNA, removing 5'-extranucleotides from tRNA precursor.. In terms of biological role, part of ribonuclease P, a protein complex that generates mature tRNA molecules by cleaving their 5'-ends. The protein is Ribonuclease P protein component 4 of Saccharolobus islandicus (strain M.14.25 / Kamchatka #1) (Sulfolobus islandicus).